The chain runs to 155 residues: Ribosomal RNA large subunit methyltransferase H (155 aa).

Residues Gly-104 and 123 to 128 (FGNITL) contribute to the S-adenosyl-L-methionine site.

It belongs to the RNA methyltransferase RlmH family. Homodimer.

Its subcellular location is the cytoplasm. The catalysed reaction is pseudouridine(1915) in 23S rRNA + S-adenosyl-L-methionine = N(3)-methylpseudouridine(1915) in 23S rRNA + S-adenosyl-L-homocysteine + H(+). Its function is as follows. Specifically methylates the pseudouridine at position 1915 (m3Psi1915) in 23S rRNA. The chain is Ribosomal RNA large subunit methyltransferase H from Mesoplasma florum (strain ATCC 33453 / NBRC 100688 / NCTC 11704 / L1) (Acholeplasma florum).